We begin with the raw amino-acid sequence, 310 residues long: Translocator protein BipD (310 aa).

Coiled-coil stretches lie at residues 127-171 and 250-299; these read DPIL…LQDY and DTAR…AIST.

This sequence belongs to the invasin protein D family.

The protein localises to the secreted. In terms of biological role, required for invasion of epithelial cells, as well as for survival within host cells, escape from endocytic vesicles and subsequent actin-tail formation. Probably regulates the secretion of effectors BipB and BipC and their final integration into the target cell membrane. The protein is Translocator protein BipD (bipD) of Burkholderia mallei (strain NCTC 10247).